Here is a 557-residue protein sequence, read N- to C-terminus: DNA replication factor Cdt1 (557 aa).

Residues 1–25 (MAQSRVTDFYACRRPGLTTPRAKSI) carry the PIP-box K+4 motif motif. Residues 20–113 (PRAKSICLTP…VCPSPVKRTK (94 aa)) are disordered. Threonine 28 is subject to Phosphothreonine; by MAPK8. Residue serine 30 is modified to Phosphoserine. The short motif at 65 to 67 (RRL) is the Cyclin-binding motif element. A compositionally biased stretch (low complexity) spans 69 to 81 (LPGLDSCPSSLPE). The segment covering 82 to 106 (PSSPAEPSPPADPSPPADPGSPVCP) has biased composition (pro residues). Serine 107 is subject to Phosphoserine; by MAPK8. Residues 163 to 203 (PSTPDAKVPTEQPCVEKAPAYQRFHALAQPGLPGLVLPYKY) are interaction with GMNN. Position 392 is a phosphoserine (serine 392). The tract at residues 397-427 (RSAEPGSPGTSTPPLPATPPATPPAASPSAL) is disordered. Residues 407-422 (STPPLPATPPATPPAA) are compositionally biased toward pro residues. The interaction with LRWD1 stretch occupies residues 463-557 (LERLPELARV…LAHHVHAEGL (95 aa)).

Belongs to the Cdt1 family. In terms of assembly, interacts with GMNN; the interaction inhibits the binding of the MCM complex to origins of replication. Interacts with MCM6. Interacts with CDC6; are mutually dependent on one another for loading MCM complexes onto chromatin. Interacts with PCNA. Interacts with LRWD1 during G1 phase and during mitosis. Interacts with NDC80 subunit of the NDC80 complex; leading to kinetochore localization. Interacts with KAT7. Interacts with ubiquitin-binding protein FAF1; the interaction is likely to promote CDT1 degradation. In terms of processing, two independent E3 ubiquitin ligase complexes, SCF(SKP2) and the DCX(DTL) complex, mediated CDT1 degradation in S phase. Ubiquitinated by the DCX(DTL) complex, in response to DNA damage, leading to its degradation. Ubiquitination by the DCX(DTL) complex is necessary to ensure proper cell cycle regulation and is PCNA-dependent: interacts with PCNA via its PIP-box, while the presence of the containing the 'K+4' motif in the PIP box, recruit the DCX(DTL) complex, leading to its degradation. Phosphorylation at Thr-28 by CDK2 targets CDT1 for ubiquitynation by SCF(SKP2) E3 ubiquitin ligase and subsequent degradation. The interaction with GMNN protects it against ubiquitination. Deubiquitinated by USP37. Ubiquitinated and degraded by the SCF(FBXO31) complex during the G2 phase to prevent re-replication. Phosphorylation by cyclin A-dependent kinases at Thr-28 targets CDT1 for ubiquitynation by SCF(SKP2) E3 ubiquitin ligase and subsequent degradation. Phosphorylated at Thr-28 by MAPK8/JNK1, which blocks replication licensing in response to stress. Binding to GMNN is not affected by phosphorylation.

It is found in the nucleus. The protein resides in the chromosome. Its subcellular location is the centromere. The protein localises to the kinetochore. Functionally, required for both DNA replication and mitosis. DNA replication licensing factor, required for pre-replication complex assembly. Cooperates with CDC6 and the origin recognition complex (ORC) during G1 phase of the cell cycle to promote the loading of the mini-chromosome maintenance (MCM) complex onto DNA to generate pre-replication complexes (pre-RC). Required also for mitosis by promoting stable kinetochore-microtubule attachments. Potential oncogene. This Mus musculus (Mouse) protein is DNA replication factor Cdt1.